The following is a 662-amino-acid chain: Cytochrome bo(3) ubiquinol oxidase subunit 1 (662 aa).

The Extracellular segment spans residues 1–14 (MFGKLTFDAIPYHE). Residues 15 to 35 (PIIMITYIAIILIALCIASTI) form a helical membrane-spanning segment. Residues 36-58 (TYYKKWKYLWYEWFTTVDHKKIS) lie on the Cytoplasmic side of the membrane. The chain crosses the membrane as a helical span at residues 59–79 (IMYGILAFVMLFRGFVDAILM). The a ubiquinone site is built by Arg-71, Asp-75, and His-98. Over 80–106 (RTQQVVASAGFKGFLPPHHYDQIFTAH) the chain is Extracellular. Position 106 (His-106) interacts with heme b. The chain crosses the membrane as a helical span at residues 107–127 (GVIMIFFVAMPLVIGLMNLVI). Residues 128-145 (PLQIGARDVAFPFLNNLS) lie on the Cytoplasmic side of the membrane. A helical membrane pass occupies residues 146–166 (FWLNVSSAVLLTLSLGIGEFA). Over 167 to 189 (QTGWLAYPPLSGIKYSSGVGVDY) the chain is Extracellular. Trp-170 contributes to the heme b binding site. The helical transmembrane segment at 190–210 (WIWSLQISGVGTTLTGINFLV) threads the bilayer. The Cytoplasmic segment spans residues 211–232 (TILKMRAPGMSFFKMPVFTWTS). A helical transmembrane segment spans residues 233 to 253 (LCTNILIVISFPVLTVTLVLL). Residues 254–277 (TLDRYFNFHFFTNDLGGNAMMYVN) lie on the Extracellular side of the membrane. The chain crosses the membrane as a helical span at residues 278–298 (LIWIWGHPEVYILVLPVFGVF). His-284 contributes to the Cu(2+) binding site. The 1'-histidyl-3'-tyrosine (His-Tyr) cross-link spans 284–288 (HPEVY). Tyr-288 contributes to the Fe(II)-heme o binding site. The Cytoplasmic portion of the chain corresponds to 299-309 (SEVVATFSKKR). Residues 310–330 (LFGYVSLVWATLSITILSFIV) form a helical membrane-spanning segment. The Extracellular segment spans residues 331–346 (WLHHFFTMGAGADVNT). Positions 333 and 334 each coordinate Cu(2+). Residues 347–367 (FFGITTMIIAIPTGVKIFNWL) traverse the membrane as a helical segment. The Cytoplasmic portion of the chain corresponds to 368 to 380 (FTIYQGRVHMHSS). Residues 381 to 401 (ILWTLGFLVTFSIGGMTGVLL) form a helical membrane-spanning segment. At 402-413 (SVPPADFVLHNS) the chain is on the extracellular side. The Fe(II)-heme o site is built by His-411 and His-419. The chain crosses the membrane as a helical span at residues 414–434 (LFLVAHFHNVIIGGVVFGCFA). Residue His-421 participates in heme b binding. Over 435-456 (GINYWFPKLFGFVLNEIWGKRA) the chain is Cytoplasmic. A helical membrane pass occupies residues 457 to 477 (FWFWIIGFFLAFIPLYFLGLM). Topologically, residues 478–493 (GMTRRLSQNIDSEFHM) are extracellular. Residues Arg-481 and Arg-482 each contribute to the heme b site. Residues 494–514 (LLCIAAIGACFIGIGIICQVI) form a helical membrane-spanning segment. The Cytoplasmic segment spans residues 515 to 586 (QFFISIKERR…INSINYHDIH (72 aa)). Residues 587-607 (MPKNTGLGFMISIFSLFFGFS) form a helical membrane-spanning segment. Position 608 (Ala-608) is a topological domain, extracellular. The helical transmembrane segment at 609–629 (VWHITWLCILSFLAIIISLFI) threads the bilayer. At 630-662 (NSLNEDTEYTISAEEIKKIEHQYWKNIQKAGLK) the chain is on the cytoplasmic side.

Belongs to the heme-copper respiratory oxidase family. The cytochrome bo(3) ubiquinol oxidase complex is a heterooctamer of two A chains, two B chains, two C chains and two D chains. Cu(2+) is required as a cofactor. Heme b serves as cofactor. It depends on Fe(II)-heme o as a cofactor.

The protein localises to the cell membrane. The enzyme catalyses 2 a ubiquinol + O2 + n H(+)(in) = 2 a ubiquinone + 2 H2O + n H(+)(out). Its function is as follows. Cytochrome bo(3) ubiquinol oxidase is the terminal enzyme in the aerobic respiratory chain. Catalyzes the four-electron reduction of O2 to water, using a ubiquinol as a membrane soluble electron donor for molecular oxygen reduction. Has proton pump activity across the membrane in addition to electron transfer, pumping 2 protons/electron and generating a proton motive force. All the redox centers of this enzyme complex are located within the largest subunit, subunit I. Protons are probably pumped via D- and K- channels found in this subunit. The protein is Cytochrome bo(3) ubiquinol oxidase subunit 1 (cyoB) of Buchnera aphidicola subsp. Acyrthosiphon pisum (strain APS) (Acyrthosiphon pisum symbiotic bacterium).